The sequence spans 262 residues: Flap endonuclease Xni (262 aa).

Residue Asp105 coordinates Mg(2+). The 5'-3' exonuclease domain maps to 162-257 (ERSQFLDLMA…FRVIDSPPEK (96 aa)). Positions 172, 173, 181, 183, and 186 each coordinate K(+). The interaction with DNA stretch occupies residues 185 to 190 (GIGPKS).

It belongs to the Xni family. Mg(2+) serves as cofactor. K(+) is required as a cofactor.

In terms of biological role, has flap endonuclease activity. During DNA replication, flap endonucleases cleave the 5'-overhanging flap structure that is generated by displacement synthesis when DNA polymerase encounters the 5'-end of a downstream Okazaki fragment. The protein is Flap endonuclease Xni of Shewanella baltica (strain OS223).